We begin with the raw amino-acid sequence, 193 residues long: MKLLEERILKDGHILGDNILKVDSFLTHQVDFSLMREIGKVFAEKFATTGITKVVTIEASGIAPAVFTAEALNVPMIFAKKAKNITMNEGILTAQVYSFTKQVTSTVSIAEKFLSPEDKVLIIDDFLANGQAAKGLIQIIEQAGATVQAIGIVIEKSFQDGRDLLEKAGYPVLSLARLDCFENGQVVFKEADL.

Xanthine is bound by residues Leu20 and Thr27. Ala128–Ala132 contacts 5-phospho-alpha-D-ribose 1-diphosphate. Lys156 serves as a coordination point for xanthine.

The protein belongs to the purine/pyrimidine phosphoribosyltransferase family. Xpt subfamily. In terms of assembly, homodimer.

The protein resides in the cytoplasm. The enzyme catalyses XMP + diphosphate = xanthine + 5-phospho-alpha-D-ribose 1-diphosphate. Its pathway is purine metabolism; XMP biosynthesis via salvage pathway; XMP from xanthine: step 1/1. Functionally, converts the preformed base xanthine, a product of nucleic acid breakdown, to xanthosine 5'-monophosphate (XMP), so it can be reused for RNA or DNA synthesis. The protein is Xanthine phosphoribosyltransferase of Streptococcus pneumoniae serotype 4 (strain ATCC BAA-334 / TIGR4).